We begin with the raw amino-acid sequence, 320 residues long: Serpentine receptor class gamma-17 (320 aa).

6 helical membrane passes run 25–45 (AIYFVTACYLSVGLFCHISLL), 80–100 (IFFGRIFMYIPQLCPFVSTFF), 155–175 (FIMLILPFAGLWNIMISQVIA), 192–212 (WASLSLFQSICILTALGFTIV), 237–257 (FTSISISCTFLLVAGTQLTFA), and 268–288 (YILQFLAFDTFNVGSAIIMFL).

Belongs to the nematode receptor-like protein srg family.

It localises to the membrane. This is Serpentine receptor class gamma-17 (srg-17) from Caenorhabditis elegans.